A 72-amino-acid chain; its full sequence is DNA gyrase inhibitor YacG (72 aa).

The Zn(2+) site is built by C17, C20, C32, and C36. Residues I51–R72 form a disordered region.

Belongs to the DNA gyrase inhibitor YacG family. In terms of assembly, interacts with GyrB. Zn(2+) is required as a cofactor.

In terms of biological role, inhibits all the catalytic activities of DNA gyrase by preventing its interaction with DNA. Acts by binding directly to the C-terminal domain of GyrB, which probably disrupts DNA binding by the gyrase. In Methylorubrum extorquens (strain PA1) (Methylobacterium extorquens), this protein is DNA gyrase inhibitor YacG.